The sequence spans 634 residues: Poly(ribitol-phosphate) beta-glucosyltransferase (634 aa).

It belongs to the glycosyltransferase 2 family.

The enzyme catalyses 4-O-[(D-ribitylphospho)(n)-D-ribitylphospho-(2R)-glycerylphospho]-N-acetyl-beta-D-mannosaminyl-(1-&gt;4)-N-acetyl-alpha-D-glucosaminyl di-trans,octa-cis-undecaprenyl diphosphate + n UDP-alpha-D-glucose = 4-O-[(2-beta-D-glucosyl-D-ribitylphospho)(n)-D-ribitylphospho-(2R)-glycerylphospho]-N-acetyl-beta-D-mannosaminyl-(1-&gt;4)-N-acetyl-alpha-D-glucosaminyl di-trans,octa-cis-undecaprenyl diphosphate + n UDP + n H(+). It participates in cell wall biogenesis; poly(ribitol phosphate) teichoic acid biosynthesis. In terms of biological role, attaches glucose residues to poly(RboP)-wall teichoic acids (WTAs). The protein is Poly(ribitol-phosphate) beta-glucosyltransferase of Bacillus spizizenii (strain ATCC 23059 / NRRL B-14472 / W23) (Bacillus subtilis subsp. spizizenii).